The following is a 139-amino-acid chain: NADPH-dependent 7-cyano-7-deazaguanine reductase (139 aa).

C34 serves as the catalytic Thioimide intermediate. D41 serves as the catalytic Proton donor. Substrate contacts are provided by residues 56–58 and 75–76; these read VEL and HE.

This sequence belongs to the GTP cyclohydrolase I family. QueF type 1 subfamily.

It is found in the cytoplasm. It catalyses the reaction 7-aminomethyl-7-carbaguanine + 2 NADP(+) = 7-cyano-7-deazaguanine + 2 NADPH + 3 H(+). The protein operates within tRNA modification; tRNA-queuosine biosynthesis. In terms of biological role, catalyzes the NADPH-dependent reduction of 7-cyano-7-deazaguanine (preQ0) to 7-aminomethyl-7-deazaguanine (preQ1). The polypeptide is NADPH-dependent 7-cyano-7-deazaguanine reductase (Nitrosospira multiformis (strain ATCC 25196 / NCIMB 11849 / C 71)).